Here is a 164-residue protein sequence, read N- to C-terminus: Protein SprT (164 aa).

Residues 12 to 157 enclose the SprT-like domain; the sequence is CFLQAESFFK…CRRCRQTLVF (146 aa). A Zn(2+)-binding site is contributed by H69. The active site involves E70. H73 lines the Zn(2+) pocket.

It belongs to the SprT family. It depends on Zn(2+) as a cofactor.

Its subcellular location is the cytoplasm. The protein is Protein SprT of Pseudomonas fluorescens (strain SBW25).